We begin with the raw amino-acid sequence, 225 residues long: ATP-dependent Clp protease proteolytic subunit (225 aa).

The active-site Nucleophile is Ser123. His148 is an active-site residue.

It belongs to the peptidase S14 family. Fourteen ClpP subunits assemble into 2 heptameric rings which stack back to back to give a disk-like structure with a central cavity, resembling the structure of eukaryotic proteasomes.

Its subcellular location is the cytoplasm. It carries out the reaction Hydrolysis of proteins to small peptides in the presence of ATP and magnesium. alpha-casein is the usual test substrate. In the absence of ATP, only oligopeptides shorter than five residues are hydrolyzed (such as succinyl-Leu-Tyr-|-NHMec, and Leu-Tyr-Leu-|-Tyr-Trp, in which cleavage of the -Tyr-|-Leu- and -Tyr-|-Trp bonds also occurs).. Its function is as follows. Cleaves peptides in various proteins in a process that requires ATP hydrolysis. Has a chymotrypsin-like activity. Plays a major role in the degradation of misfolded proteins. The chain is ATP-dependent Clp protease proteolytic subunit from Chlorobaculum tepidum (strain ATCC 49652 / DSM 12025 / NBRC 103806 / TLS) (Chlorobium tepidum).